An 83-amino-acid polypeptide reads, in one-letter code: Cytochrome c oxidase subunit 12, mitochondrial (83 aa).

The region spanning 24–67 (TKHCWQSYVDYHKCVNMKGEDFAPCKVFWKTYNALCPLDWIEKW) is the CHCH domain. Positions 27–37 (CWQSYVDYHKC) match the Cx9C motif motif. 2 disulfides stabilise this stretch: Cys27/Cys59 and Cys37/Cys48. The Cx10C motif motif lies at 48–59 (CKVFWKTYNALC). Residue Ser82 is modified to Phosphoserine.

It belongs to the cytochrome c oxidase subunit 6B family. In terms of assembly, component of the cytochrome c oxidase (complex IV, CIV), a multisubunit enzyme composed of 12 subunits. The complex is composed of a catalytic core of 3 subunits COX1, COX2 and COX3, encoded in the mitochondrial DNA, and 9 supernumerary subunits COX4, COX5A (or COX5B), COX6, COX7, COX8, COX9, COX12, COX13 and COX26, which are encoded in the nuclear genome. The complex exists as a monomer or a dimer and forms supercomplexes (SCs) in the inner mitochondrial membrane with a dimer of ubiquinol-cytochrome c oxidoreductase (cytochrome b-c1 complex, complex III, CIII), resulting in 2 different assemblies (supercomplexes III(2)IV and III(2)IV(2)).

It is found in the mitochondrion inner membrane. It participates in energy metabolism; oxidative phosphorylation. Functionally, component of the cytochrome c oxidase, the last enzyme in the mitochondrial electron transport chain which drives oxidative phosphorylation. The respiratory chain contains 3 multisubunit complexes succinate dehydrogenase (complex II, CII), ubiquinol-cytochrome c oxidoreductase (cytochrome b-c1 complex, complex III, CIII) and cytochrome c oxidase (complex IV, CIV), that cooperate to transfer electrons derived from NADH and succinate to molecular oxygen, creating an electrochemical gradient over the inner membrane that drives transmembrane transport and the ATP synthase. Cytochrome c oxidase is the component of the respiratory chain that catalyzes the reduction of oxygen to water. Electrons originating from reduced cytochrome c in the intermembrane space (IMS) are transferred via the dinuclear copper A center (CU(A)) of COX2 and heme A of COX1 to the active site in COX1, a binuclear center (BNC) formed by heme A3 and copper B (CU(B)). The BNC reduces molecular oxygen to 2 water molecules unsing 4 electrons from cytochrome c in the IMS and 4 protons from the mitochondrial matrix. The chain is Cytochrome c oxidase subunit 12, mitochondrial (COX12) from Saccharomyces cerevisiae (strain ATCC 204508 / S288c) (Baker's yeast).